We begin with the raw amino-acid sequence, 499 residues long: Spore germination protein GerQA (499 aa).

3 consecutive transmembrane segments (helical) span residues 285–305 (LFAFIFSVLTTPLYVSILTYH), 376–396 (SNVLIIIVALSALSSFTAPIY), and 409–429 (FIISAHLLGLLGIVLTSSLLL).

This sequence belongs to the GerABKA family.

The protein resides in the membrane. Its function is as follows. Required for the germination response to inosine. Has no role in L-alanine germination. The protein is Spore germination protein GerQA (gerQA) of Bacillus cereus.